We begin with the raw amino-acid sequence, 288 residues long: Pantothenate synthetase (288 aa).

Met30–His37 lines the ATP pocket. Catalysis depends on His37, which acts as the Proton donor. Gln61 provides a ligand contact to (R)-pantoate. Residue Gln61 coordinates beta-alanine. Position 149–152 (Gly149–Asp152) interacts with ATP. (R)-pantoate is bound at residue Gln155. Residues Ile178 and Leu186–Arg189 each bind ATP.

Belongs to the pantothenate synthetase family. Homodimer.

The protein localises to the cytoplasm. The catalysed reaction is (R)-pantoate + beta-alanine + ATP = (R)-pantothenate + AMP + diphosphate + H(+). The protein operates within cofactor biosynthesis; (R)-pantothenate biosynthesis; (R)-pantothenate from (R)-pantoate and beta-alanine: step 1/1. Catalyzes the condensation of pantoate with beta-alanine in an ATP-dependent reaction via a pantoyl-adenylate intermediate. In Colwellia psychrerythraea (strain 34H / ATCC BAA-681) (Vibrio psychroerythus), this protein is Pantothenate synthetase.